A 48-amino-acid polypeptide reads, in one-letter code: Large ribosomal subunit protein bL32 (48 aa).

This sequence belongs to the bacterial ribosomal protein bL32 family.

The sequence is that of Large ribosomal subunit protein bL32 from Helicobacter pylori (strain P12).